The primary structure comprises 78 residues: Protein M6 (78 aa).

It belongs to the A9/FIL1 family. In terms of tissue distribution, tapetum of anthers.

It is found in the secreted. The protein is Protein M6 (M6) of Lilium henryi (Henry's lily).